The following is a 323-amino-acid chain: 1D-myo-inositol 2-acetamido-2-deoxy-alpha-D-glucopyranoside deacetylase (323 aa).

3 residues coordinate Zn(2+): His28, Asp31, and His163.

Belongs to the MshB deacetylase family. Zn(2+) serves as cofactor.

It carries out the reaction 1D-myo-inositol 2-acetamido-2-deoxy-alpha-D-glucopyranoside + H2O = 1D-myo-inositol 2-amino-2-deoxy-alpha-D-glucopyranoside + acetate. Catalyzes the deacetylation of 1D-myo-inositol 2-acetamido-2-deoxy-alpha-D-glucopyranoside (GlcNAc-Ins) in the mycothiol biosynthesis pathway. This chain is 1D-myo-inositol 2-acetamido-2-deoxy-alpha-D-glucopyranoside deacetylase, found in Streptomyces scabiei (strain 87.22).